The sequence spans 192 residues: Probable apo-citrate lyase phosphoribosyl-dephospho-CoA transferase (192 aa).

It belongs to the CitX family.

It catalyses the reaction apo-[citrate lyase ACP] + 2'-(5''-triphospho-alpha-D-ribosyl)-3'-dephospho-CoA = holo-[citrate lyase ACP] + diphosphate. In terms of biological role, transfers 2-(5''-triphosphoribosyl)-3'-dephosphocoenzyme-A on a serine residue to the apo-acyl carrier protein (gamma chain) of the citrate lyase to yield holo-acyl carrier protein. The polypeptide is Probable apo-citrate lyase phosphoribosyl-dephospho-CoA transferase (Streptococcus pyogenes serotype M6 (strain ATCC BAA-946 / MGAS10394)).